The primary structure comprises 519 residues: Flavin-dependent halogenase rdc2 (519 aa).

An N-terminal signal peptide occupies residues 1 to 21 (MSVPKSCTILVAGGGPAGSYA). Gly14, Ala17, and Glu47 together coordinate FAD. Chloride contacts are provided by Ser324 and Gly325.

It belongs to the flavin-dependent halogenase family.

It functions in the pathway secondary metabolite biosynthesis. Flavin-dependent halogenase; part of the gene cluster that mediates the biosynthesis of radicicol, a resorcylic acid lactone (RAL) that irreversibly inhibits the HSP90 molecular chaperone, an important target for cancer chemotherapy. Within the cluster, rdc2 is involved in the chlorination of the resorcylic acid lactone (RAL) structure to convert monocillin I into radicicol. Also chlorinates monocillin II to produce 6-cholomonocillin II and monocilllin IV to produce 13-chloromonocillin IV. In contrast to most fungal halogenases, rdc2 has a broad substrate specificity and can accept a variety of macrolactones as the substrates to generate chlorinated derivatives, including dihydroresorcylide, zearalenone, curvularin, or even curcumin. Rdc2 is able to dichlorinate dihydroresorcylide and monocillin IV. Dihydroresorcylide is first chlorinated at position 11 to produce 11-chlorodihydroresorcylide which can be further chlorinated by rdc2 at possition 13. Mororeover, rdc2 can incorporate bromine into dihydroresorcylide to yield the corresponding mono- and di-brominated derivatives. Finally, rdc2 is also able to halogenate the isoquinolines 4-hydroxyisoquinoline and 6-hydroxyisoquinoline into 3-chloro-4-hydroxyisoquinoline and 5-chloro-6-hydroxyisoquinoline, respectively. The radicicol cluster encodes only two apparent post-PKS enzymes, a cytochrome P450 monooxygenase (rdc4) and a non-heme halogenase (rdc2) that could introduce the epoxide and the chlorine, respectively. If this cluster includes all the genes required for radicicol biosynthesis, the remaining structural features of radicicol are presumably generated by the PKSs rdc1 and rdc5. The C-2' ketone could arise if the R-PKS rdc5 and NR-PKS rdc1 each carry out four iterations, in contrast to the five iteration-three iteration split for the hypothemycin PKSs. The origin of the cis 5',6' double bond is not known. The radicicol R-PKS rdc5 ER domain may catalyze either double bond isomerization or reduction in the third iteration. The sequence is that of Flavin-dependent halogenase rdc2 from Metacordyceps chlamydosporia (Nematophagous fungus).